Consider the following 225-residue polypeptide: Uracil-DNA glycosylase (225 aa).

Asp65 acts as the Proton acceptor in catalysis.

It belongs to the uracil-DNA glycosylase (UDG) superfamily. UNG family.

Its subcellular location is the cytoplasm. It carries out the reaction Hydrolyzes single-stranded DNA or mismatched double-stranded DNA and polynucleotides, releasing free uracil.. Excises uracil residues from the DNA which can arise as a result of misincorporation of dUMP residues by DNA polymerase or due to deamination of cytosine. The polypeptide is Uracil-DNA glycosylase (Clostridium botulinum (strain Alaska E43 / Type E3)).